Here is a 206-residue protein sequence, read N- to C-terminus: ATP-dependent dethiobiotin synthetase BioD (206 aa).

12–17 (DSGKTL) serves as a coordination point for ATP. Mg(2+) is bound at residue threonine 16. The active site involves lysine 32. Residue glutamate 99 coordinates Mg(2+). 99 to 102 (EGAG) contributes to the ATP binding site.

The protein belongs to the dethiobiotin synthetase family. In terms of assembly, homodimer. Mg(2+) is required as a cofactor.

It localises to the cytoplasm. It carries out the reaction (7R,8S)-7,8-diammoniononanoate + CO2 + ATP = (4R,5S)-dethiobiotin + ADP + phosphate + 3 H(+). Its pathway is cofactor biosynthesis; biotin biosynthesis; biotin from 7,8-diaminononanoate: step 1/2. Catalyzes a mechanistically unusual reaction, the ATP-dependent insertion of CO2 between the N7 and N8 nitrogen atoms of 7,8-diaminopelargonic acid (DAPA, also called 7,8-diammoniononanoate) to form a ureido ring. The chain is ATP-dependent dethiobiotin synthetase BioD from Cytophaga hutchinsonii (strain ATCC 33406 / DSM 1761 / CIP 103989 / NBRC 15051 / NCIMB 9469 / D465).